The primary structure comprises 216 residues: MGKIGIFGGTFDPPHYGHLLMANEVLDALQLSEIWFLPNRLPPHKQHEQVTKSEDRLRMLELAVAGHPRFHIETIELEREGPSYTYDTIRQLVAMHPNDEFYFIIGADMVEYLPHWHRIDELIELVTFVGVKRPGFSMETPYPVIEVEAPQFAVSSSLIRERVRNGQTIRYLVPEGVRLYIEEKGLYGARTGVTDRETTADRAALRAYAWRCRDRC.

The protein belongs to the NadD family.

It carries out the reaction nicotinate beta-D-ribonucleotide + ATP + H(+) = deamido-NAD(+) + diphosphate. Its pathway is cofactor biosynthesis; NAD(+) biosynthesis; deamido-NAD(+) from nicotinate D-ribonucleotide: step 1/1. Catalyzes the reversible adenylation of nicotinate mononucleotide (NaMN) to nicotinic acid adenine dinucleotide (NaAD). The chain is Probable nicotinate-nucleotide adenylyltransferase from Geobacillus kaustophilus (strain HTA426).